A 324-amino-acid polypeptide reads, in one-letter code: Probable cell division protein WhiA (324 aa).

The H-T-H motif DNA-binding region spans 275 to 308 (SLEELGALADPPLTKDAIAGRIRRLIAMADRRAD).

Belongs to the WhiA family.

In terms of biological role, involved in cell division and chromosome segregation. The chain is Probable cell division protein WhiA from Acidothermus cellulolyticus (strain ATCC 43068 / DSM 8971 / 11B).